An 851-amino-acid polypeptide reads, in one-letter code: DNA mismatch repair protein MutS (851 aa).

614-621 (GPNMGGKS) is a binding site for ATP.

Belongs to the DNA mismatch repair MutS family.

In terms of biological role, this protein is involved in the repair of mismatches in DNA. It is possible that it carries out the mismatch recognition step. This protein has a weak ATPase activity. The sequence is that of DNA mismatch repair protein MutS from Yersinia enterocolitica serotype O:8 / biotype 1B (strain NCTC 13174 / 8081).